Here is a 131-residue protein sequence, read N- to C-terminus: Small ribosomal subunit protein eS17A (131 aa).

This sequence belongs to the eukaryotic ribosomal protein eS17 family. In terms of assembly, component of the small ribosomal subunit (SSU). Mature yeast ribosomes consist of a small (40S) and a large (60S) subunit. The 40S small subunit contains 1 molecule of ribosomal RNA (18S rRNA) and at least 33 different proteins. The large 60S subunit contains 3 rRNA molecules (25S, 5.8S and 5S rRNA) and at least 46 different proteins.

The protein localises to the cytoplasm. Component of the ribosome, a large ribonucleoprotein complex responsible for the synthesis of proteins in the cell. The small ribosomal subunit (SSU) binds messenger RNAs (mRNAs) and translates the encoded message by selecting cognate aminoacyl-transfer RNA (tRNA) molecules. The large subunit (LSU) contains the ribosomal catalytic site termed the peptidyl transferase center (PTC), which catalyzes the formation of peptide bonds, thereby polymerizing the amino acids delivered by tRNAs into a polypeptide chain. The nascent polypeptides leave the ribosome through a tunnel in the LSU and interact with protein factors that function in enzymatic processing, targeting, and the membrane insertion of nascent chains at the exit of the ribosomal tunnel. The polypeptide is Small ribosomal subunit protein eS17A (rps1701) (Schizosaccharomyces pombe (strain 972 / ATCC 24843) (Fission yeast)).